The primary structure comprises 264 residues: MHKLKLHGFNNLTKSLSFCIYDICYTKTADDRDGYIAYIDEQYNANRLTEILTETCSIIGANVLNIARQDYDPQGASVTILVSEEPIDPRDVDTSEHPGPLPNSVVAHLDKSHICVHTYPESHPEGGLCTFRADIEVSTCGVISPLKALNYLIHQLESDIVTIDYRVRGFTRDINGVKHFIDHQINSVQNFMSEDMKSLYHMMDVNVYQENIFHTKMLLKDFDLKHYLFNVNPEELSAAERKRITDLLYHEMQEIYYGRNLPVL.

S112 acts as the Schiff-base intermediate with substrate; via pyruvic acid in catalysis. S112 is subject to Pyruvic acid (Ser); by autocatalysis. H117 acts as the Proton acceptor; for processing activity in catalysis. Residue C140 is the Proton donor; for catalytic activity of the active site.

It belongs to the prokaryotic AdoMetDC family. Type 2 subfamily. Heterooctamer of four alpha and four beta chains arranged as a tetramer of alpha/beta heterodimers. The cofactor is pyruvate. Is synthesized initially as an inactive proenzyme. Formation of the active enzyme involves a self-maturation process in which the active site pyruvoyl group is generated from an internal serine residue via an autocatalytic post-translational modification. Two non-identical subunits are generated from the proenzyme in this reaction, and the pyruvate is formed at the N-terminus of the alpha chain, which is derived from the carboxyl end of the proenzyme. The post-translation cleavage follows an unusual pathway, termed non-hydrolytic serinolysis, in which the side chain hydroxyl group of the serine supplies its oxygen atom to form the C-terminus of the beta chain, while the remainder of the serine residue undergoes an oxidative deamination to produce ammonia and the pyruvoyl group blocking the N-terminus of the alpha chain.

It carries out the reaction S-adenosyl-L-methionine + H(+) = S-adenosyl 3-(methylsulfanyl)propylamine + CO2. It functions in the pathway amine and polyamine biosynthesis; S-adenosylmethioninamine biosynthesis; S-adenosylmethioninamine from S-adenosyl-L-methionine: step 1/1. Functionally, catalyzes the decarboxylation of S-adenosylmethionine to S-adenosylmethioninamine (dcAdoMet), the propylamine donor required for the synthesis of the polyamines spermine and spermidine from the diamine putrescine. In Pectobacterium atrosepticum (strain SCRI 1043 / ATCC BAA-672) (Erwinia carotovora subsp. atroseptica), this protein is S-adenosylmethionine decarboxylase proenzyme.